The chain runs to 664 residues: E3 ubiquitin-protein ligase RNF139 (664 aa).

Ala-2 bears the N-acetylalanine mark. 12 helical membrane-spanning segments follow: residues 51-71 (IVLQIFLRLFGVFASSIVLIL), 85-105 (AFLLAATSVLVNYYASLHIDF), 125-145 (SLWMALIVLQLTFGIGYVTLL), 154-174 (LIILDLLVPVIGLITELPLHI), 178-198 (LLFTSSLILTLNTVFVLAVKL), 293-313 (GMSAVISSVAHYLGLGILAFI), 323-343 (LGFVAPVLFFILALQTGLSGL), 356-376 (MCLLLTAVLHFIHGMTDPVLM), 390-410 (FPVLFVSACLFILPVLLSYVL), 420-440 (LFAVTAFCVELCLKVIVSLTV), 469-489 (SIIEFIFGVVMFGNGAYTMMF), and 495-512 (IRAFMMCLHAYFNIYLQA). The RING-type; atypical zinc finger occupies 547–586 (CAICYHEFTTSARITPCNHYFHALCLRKWLYIQDTCPMCH). The disordered stretch occupies residues 601–664 (VSNNNGFIPP…AAEEFNDDTD (64 aa)). Over residues 616–628 (EAVREAAAESDRE) the composition is skewed to basic and acidic residues. A compositionally biased stretch (acidic residues) spans 629 to 639 (LNEDDSTDCDD). Ser-634 is subject to Phosphoserine. Residues Thr-635 and Thr-663 each carry the phosphothreonine modification.

As to quaternary structure, interacts with MHC class I and HM13. Interacts with VHL. Component of SCAP-SREBP complex composed of SREBF2, SCAP and RNF139; the complex hampers the interaction between SCAP and SEC24B, thereby reducing SREBF2 proteolytic processing. Interacts with SREBF2 (via C-terminal domain). Interacts with SCAP; the interaction inhibits the interaction of SCAP with SEC24B and hampering the ER to Golgi transport of the SCAP-SREBP complex. Interacts with SEC24B. Interacts with INSIG1 and INSIG2. Interacts with EIF3F and EIF3H; the interaction leads to protein translation inhibitions in a ubiquitination-dependent manner. Interacts with XBP1 isoform 1; the interaction induces ubiquitination and degradation of XBP1 isoform 1. Interacts with AUP1, AMFR and UBE2G2; interaction with AUP1 facilitates interaction of RNF139 with ubiquitin-conjugating enzyme UBE2G2 and ubiquitin ligase AMFR/gp78, leading to sterol-induced ubiquitination of HMGCR and its subsequent proteasomal degradation. In terms of processing, autoubiquitinated. Ubiquitination is induced by sterol and leads to ist degradation via the ubiquitin-proteasome pathway. Highly expressed in testis, placenta and adrenal gland. Moderate expression in heart, brain, liver, skeletal muscle and pancreas, and low expression in lung and kidney.

The protein resides in the endoplasmic reticulum membrane. The enzyme catalyses S-ubiquitinyl-[E2 ubiquitin-conjugating enzyme]-L-cysteine + [acceptor protein]-L-lysine = [E2 ubiquitin-conjugating enzyme]-L-cysteine + N(6)-ubiquitinyl-[acceptor protein]-L-lysine.. It participates in protein modification; protein ubiquitination. E3-ubiquitin ligase; acts as a negative regulator of cell proliferation through mechanisms involving G2/M arrest and cell death. Required for MHC class I ubiquitination in cells expressing the cytomegalovirus protein US2 before dislocation from the endoplasmic reticulum (ER). Affects SREBP processing by hindering the SREBP-SCAP complex translocation from the ER to the Golgi, thereby reducing SREBF2 target gene expression. Involved in the sterol-accelerated degradation of HMGCR. This is achieved through binding of RNF139 to INSIG1 and/or INSIG2 at the ER membrane. In addition, interaction of RNF139 with AUP1 facilitates interaction of RNF139 with ubiquitin-conjugating enzyme UBE2G2 and ubiquitin ligase AMFR, leading to ubiquitination of HMGCR. The ubiquitinated HMGCR is then released from the ER into the cytosol for subsequent destruction. Required for INSIG1 ubiquitination. May be required for EIF3 complex ubiquitination. In Homo sapiens (Human), this protein is E3 ubiquitin-protein ligase RNF139.